The primary structure comprises 137 residues: Global transcriptional regulator Spx (137 aa).

Residues Cys-10 and Cys-13 are joined by a disulfide bond.

It belongs to the ArsC family. Spx subfamily. As to quaternary structure, interacts with the C-terminal domain of the alpha subunit of the RNAP.

The protein resides in the cytoplasm. Global transcriptional regulator that plays a key role in stress response and exerts either positive or negative regulation of genes. Acts by interacting with the C-terminal domain of the alpha subunit of the RNA polymerase (RNAP). This interaction can enhance binding of RNAP to the promoter region of target genes and stimulate their transcription, or block interaction of RNAP with activator. The sequence is that of Global transcriptional regulator Spx from Streptococcus mutans serotype c (strain ATCC 700610 / UA159).